A 521-amino-acid polypeptide reads, in one-letter code: Vang-like protein 2 (521 aa).

Positions M1–H81 are disordered. The Cytoplasmic portion of the chain corresponds to M1 to G108. Positions G15–K33 are enriched in basic residues. Over residues E57–N67 the composition is skewed to basic and acidic residues. Residues G69–H81 are compositionally biased toward low complexity. A helical transmembrane segment spans residues V109–L129. Residues P130–G147 lie on the Extracellular side of the membrane. Residues L148–F168 form a helical membrane-spanning segment. Over R169–V178 the chain is Cytoplasmic. Residues F179 to F199 form a helical membrane-spanning segment. The Extracellular segment spans residues Y200–Q217. Residues F218–E238 form a helical membrane-spanning segment. At L239–V521 the chain is on the cytoplasmic side.

Belongs to the Vang family. Homodimer and heterodimer with Vangl1. Interacts through its C-terminal region with the N-terminal half of DVL1, DVL2 and DVL3. The PDZ domain of DVL1, DVL2 and DVL3 is required for the interaction. Variants Glu-255 and Asn-464 impair interaction with the DVL proteins. Also interacts with the PDZ domains of MAGI3, SCRIB/SCRB1 and FZD3. Interacts with PRICKLE3. As to expression, primarily expressed in the brain and epididymis. Not detected in the cochlea of Lp mice.

It is found in the cell membrane. Functionally, involved in the control of early morphogenesis and patterning of both axial midline structures and the development of neural plate. Plays a role in the regulation of planar cell polarity, particularly in the orientation of stereociliary bundles in the cochlea. Required for polarization and movement of myocardializing cells in the outflow tract and seems to act via RHOA signaling to regulate this process. Required for cell surface localization of FZD3 and FZD6 in the inner ear. The chain is Vang-like protein 2 (Vangl2) from Mus musculus (Mouse).